The following is a 738-amino-acid chain: Ethylene receptor 1 (738 aa).

The next 3 helical transmembrane spans lie at 23-43, 53-73, and 92-112; these read ISDF…IYFV, WVLV…LINL, and VLTA…IPDL. Cysteine 65 and histidine 69 together coordinate Cu cation. Positions 158 to 307 constitute a GAF domain; sequence DRHTILKTTL…VVADQVAVAL (150 aa). Residues 350-585 form the Histidine kinase domain; sequence VMNHEMRTPM…IFDVKLGISE (236 aa). Histidine 353 bears the Phosphohistidine; by autocatalysis mark. ADP is bound by residues 470 to 473, aspartate 513, lysine 529, serine 544, and leucine 548; that span reads NAVK. The Response regulatory domain occupies 611-729; sequence KVLVMDENGV…NIRDVLSDLL (119 aa). The residue at position 659 (aspartate 659) is a 4-aspartylphosphate. A Glycyl lysine isopeptide (Lys-Gly) (interchain with G-Cter in ubiquitin) cross-link involves residue lysine 714.

Belongs to the ethylene receptor family. In terms of assembly, homodimer; disulfide-linked. Heteromer with ERS1, ERS2, ETR2 and EIN4. Interacts with AHP1, AHP2 and AHP3. Interacts with RTE1. Interacts with EIN2. Requires Cu cation as cofactor. Autophosphorylated. Phosphorylation at His-353 modulates the interaction with EIN2. Leaves, roots, stems, seedlings, flowers, anthers, carpels and ovules.

The protein localises to the endoplasmic reticulum membrane. It carries out the reaction ATP + protein L-histidine = ADP + protein N-phospho-L-histidine.. Functionally, ethylene receptor related to bacterial two-component regulators. Acts as a redundant negative regulator of ethylene signaling. In the presence of ethylene, the auto-kinase activity of ETR1 is inhibited and the non-phosphorylated kinase domain binds tightly to the corresponding domain of EIN2. In Arabidopsis thaliana (Mouse-ear cress), this protein is Ethylene receptor 1.